Reading from the N-terminus, the 403-residue chain is RNA-binding motif, single-stranded-interacting protein 1 (403 aa).

The segment at 30–56 is disordered; the sequence is PAHPMAPPSPSTTSSNNNSSSSSNSGW. Over residues 40-54 the composition is skewed to low complexity; it reads STTSSNNNSSSSSNS. 2 RRM domains span residues 62 to 135 and 141 to 226; these read TNLY…MAKQ and TNLY…FADG. Thr208 is subject to Phosphothreonine.

It is found in the nucleus. Its function is as follows. Single-stranded DNA binding protein that interacts with the region upstream of the MYC gene. Binds specifically to the DNA sequence motif 5'-[AT]CT[AT][AT]T-3'. Probably has a role in DNA replication. This is RNA-binding motif, single-stranded-interacting protein 1 from Rattus norvegicus (Rat).